The sequence spans 891 residues: Schlafen family member 5 (891 aa).

A Glycyl lysine isopeptide (Lys-Gly) (interchain with G-Cter in SUMO2) cross-link involves residue Lys59. 578–585 (GLPGSGKT) contributes to the ATP binding site.

This sequence belongs to the Schlafen family. Subgroup III subfamily.

Functionally, may have a role in hematopoietic cell differentiation. The sequence is that of Schlafen family member 5 (SLFN5) from Homo sapiens (Human).